A 142-amino-acid polypeptide reads, in one-letter code: Large ribosomal subunit protein bL27m (142 aa).

The disordered stretch occupies residues 27–48 (TKKSAGSTKNGRTSQPKNLGLK). Over residues 30 to 43 (SAGSTKNGRTSQPK) the composition is skewed to polar residues.

This sequence belongs to the bacterial ribosomal protein bL27 family.

It localises to the mitochondrion. The polypeptide is Large ribosomal subunit protein bL27m (mrpl27) (Dictyostelium discoideum (Social amoeba)).